Reading from the N-terminus, the 485-residue chain is BTB/POZ domain-containing protein YLR108C (485 aa).

One can recognise a BTB domain in the interval 26-121; it reads EVFKIRIGQK…LIKEYDYHFT (96 aa).

The protein resides in the nucleus. The polypeptide is BTB/POZ domain-containing protein YLR108C (Saccharomyces cerevisiae (strain ATCC 204508 / S288c) (Baker's yeast)).